The primary structure comprises 514 residues: Glucose-1-phosphate adenylyltransferase small subunit 2, chloroplastic/amyloplastic/cytosolic (514 aa).

The N-terminal 64 residues, 1-64 (MAMAAAMGVA…RRRPLVFSPR (64 aa)), are a transit peptide targeting the chloroplast. The disordered stretch occupies residues 35 to 74 (RPRRPRGVASSSSSSSSAGRRRRPLVFSPRAVSDSKSSQT). A compositionally biased stretch (low complexity) spans 41-52 (GVASSSSSSSSA).

This sequence belongs to the bacterial/plant glucose-1-phosphate adenylyltransferase family. Heterotetramer composed of two small and two large subunits. In terms of tissue distribution, expressed in leaves.

The protein resides in the plastid. It localises to the chloroplast. The protein localises to the amyloplast. It is found in the cytoplasm. Its subcellular location is the cytosol. It carries out the reaction alpha-D-glucose 1-phosphate + ATP + H(+) = ADP-alpha-D-glucose + diphosphate. The protein operates within glycan biosynthesis; starch biosynthesis. Its activity is regulated as follows. Activated by 3'phosphoglycerate, inhibited by orthophosphate. Allosteric regulation. Inhibited by inorganic phosphate (Pi). Functionally, involved in synthesis of starch. Catalyzes the synthesis of ADP-glucose, a molecule that serves as an activated glycosyl donor for alpha-1,4-glucan synthesis. The chloroplastic isoform 1 is essential for starch synthesis in leaf chloroplasts and the cytosolic isoform 2 for synthesis in seed endosperm. In Oryza sativa subsp. japonica (Rice), this protein is Glucose-1-phosphate adenylyltransferase small subunit 2, chloroplastic/amyloplastic/cytosolic.